A 98-amino-acid polypeptide reads, in one-letter code: Cystatin-B (98 aa).

Met1 carries the N-acetylmethionine modification. The Secondary area of contact motif lies at 46 to 50 (QLVAG).

The protein belongs to the cystatin family. As to quaternary structure, able to form dimers stabilized by noncovalent forces.

The protein localises to the cytoplasm. This is an intracellular thiol proteinase inhibitor. The sequence is that of Cystatin-B (CSTB) from Ovis aries (Sheep).